The sequence spans 294 residues: 33 kDa chaperonin (294 aa).

Cystine bridges form between cysteine 239/cysteine 241 and cysteine 272/cysteine 275.

This sequence belongs to the HSP33 family. Under oxidizing conditions two disulfide bonds are formed involving the reactive cysteines. Under reducing conditions zinc is bound to the reactive cysteines and the protein is inactive.

Its subcellular location is the cytoplasm. Redox regulated molecular chaperone. Protects both thermally unfolding and oxidatively damaged proteins from irreversible aggregation. Plays an important role in the bacterial defense system toward oxidative stress. This chain is 33 kDa chaperonin, found in Listeria welshimeri serovar 6b (strain ATCC 35897 / DSM 20650 / CCUG 15529 / CIP 8149 / NCTC 11857 / SLCC 5334 / V8).